A 393-amino-acid polypeptide reads, in one-letter code: Triacylglycerol lipase 1 (393 aa).

A signal peptide spans 1–20; the sequence is MKWLLVAVLTSLTIFSALTQ. The N-linked (GlcNAc...) asparagine glycan is linked to Asn41. The active-site Nucleophile is Ser166. Asn261 is a glycosylation site (N-linked (GlcNAc...) asparagine). Active-site charge relay system residues include Asp334 and His363.

It belongs to the AB hydrolase superfamily. Lipase family. As to expression, expressed in seedlings, roots, leaves, flowers and siliques. Specifically expressed in the epidermis.

The protein localises to the secreted. It catalyses the reaction a triacylglycerol + H2O = a diacylglycerol + a fatty acid + H(+). The enzyme catalyses 1,2,3-tributanoylglycerol + H2O = dibutanoylglycerol + butanoate + H(+). The catalysed reaction is 1,2,3-trioctanoylglycerol + H2O = dioctanoylglycerol + octanoate + H(+). The protein operates within lipid metabolism; glycerolipid metabolism. Functionally, triacylglycerol (TAG) lipase active on triolein, trioctanoin, tributyrin and 1,3-Diolein, but not on phospho- and galactolipids. Involved but dispensable for TAG storage breakdown during seed germination. This chain is Triacylglycerol lipase 1, found in Arabidopsis thaliana (Mouse-ear cress).